A 293-amino-acid chain; its full sequence is Probable endonuclease 4 (293 aa).

Zn(2+)-binding residues include His-75, His-115, Glu-153, Asp-187, His-190, His-224, Asp-237, His-239, and Glu-269.

This sequence belongs to the AP endonuclease 2 family. Requires Zn(2+) as cofactor.

The enzyme catalyses Endonucleolytic cleavage to 5'-phosphooligonucleotide end-products.. Its function is as follows. Endonuclease IV plays a role in DNA repair. It cleaves phosphodiester bonds at apurinic or apyrimidinic (AP) sites, generating a 3'-hydroxyl group and a 5'-terminal sugar phosphate. This Chlamydia pneumoniae (Chlamydophila pneumoniae) protein is Probable endonuclease 4.